The primary structure comprises 539 residues: Phosphoenolpyruvate carboxykinase (ATP) (539 aa).

Substrate-binding residues include Arg-64, Tyr-206, and Lys-212. ATP-binding positions include Lys-212, His-231, and 247 to 255 (GLSGTGKTT). 2 residues coordinate Mn(2+): Lys-212 and His-231. Asp-268 lines the Mn(2+) pocket. ATP-binding positions include Glu-296, Arg-332, 448–449 (RI), and Thr-454. A substrate-binding site is contributed by Arg-332.

This sequence belongs to the phosphoenolpyruvate carboxykinase (ATP) family. In terms of assembly, monomer. It depends on Mn(2+) as a cofactor.

Its subcellular location is the cytoplasm. It carries out the reaction oxaloacetate + ATP = phosphoenolpyruvate + ADP + CO2. The protein operates within carbohydrate biosynthesis; gluconeogenesis. Its function is as follows. Involved in the gluconeogenesis. Catalyzes the conversion of oxaloacetate (OAA) to phosphoenolpyruvate (PEP) through direct phosphoryl transfer between the nucleoside triphosphate and OAA. This chain is Phosphoenolpyruvate carboxykinase (ATP), found in Pectobacterium carotovorum subsp. carotovorum (strain PC1).